The following is a 595-amino-acid chain: Solute carrier family 13 member 1 (595 aa).

5 helical membrane-spanning segments follow: residues 13 to 33 (FLLVVFTVLVLLPLPLIIRSK), 40 to 60 (ILFVIATFWITEALPLSITAL), 77 to 97 (VASAYFKDFHLLLIGVICLAT), 113 to 133 (VMMVGVNPAWLTLGFMSSTAF), and 134 to 154 (LSMWLSNTSTAAMVMPIVEAV). The N-linked (GlcNAc...) asparagine glycan is linked to asparagine 174. Residues 190–218 (QETNERKEKTKPALGSSNDKGKVSSKMET) form a disordered region. The segment covering 208–218 (DKGKVSSKMET) has biased composition (basic and acidic residues). The next 8 membrane-spanning stretches (helical) occupy residues 239 to 259 (LMCLCIAYSSTIGGLTTITGT), 283 to 303 (SWFLFSFPVAVILLLLSWIWL), 348 to 368 (IVTLVIFIVMALLWFSRDPGF), 381 to 401 (GYVTDSTVALVAGILFFLIPA), 464 to 484 (PLGSLPVWLIILISSLIVTSL), 491 to 511 (PATITILFPILSPLAEAIHVN), 512 to 532 (PLHILLPSTLCTSFAFLLPVA), and 553 to 573 (AGLGVNILGVAVVMLGMFTWI). Asparagine 591 is a glycosylation site (N-linked (GlcNAc...) asparagine).

This sequence belongs to the SLC13A/DASS transporter (TC 2.A.47) family. NADC subfamily. In terms of tissue distribution, kidney and intestine.

It is found in the apical cell membrane. It catalyses the reaction sulfate(out) + 3 Na(+)(out) = sulfate(in) + 3 Na(+)(in). It carries out the reaction selenate(out) + 3 Na(+)(out) = selenate(in) + 3 Na(+)(in). The catalysed reaction is thiosulfate(out) + 3 Na(+)(out) = thiosulfate(in) + 3 Na(+)(in). Sodium:sulfate symporter that mediates sulfate reabsorption in the kidney and small intestine. Can also mediate the transport of selenate and thiosulfate. The protein is Solute carrier family 13 member 1 (Slc13a1) of Rattus norvegicus (Rat).